The sequence spans 459 residues: LETM1 domain-containing protein LETM2, mitochondrial (459 aa).

Residues 1–25 (MAFYSYNSFLAIFWTRLPGHSVHPP) constitute a mitochondrion transit peptide. Residues 26-176 (CSHFPPLAFF…LLRTCADVFR (151 aa)) are Mitochondrial intermembrane-facing. The tract at residues 88-114 (GKPQPEQIPEEPKATDPQPTKDDQTEV) is disordered. Residues 97–111 (EEPKATDPQPTKDDQ) are compositionally biased toward basic and acidic residues. Residues 177–197 (LVPFVVFIIVPFMEFLIPVFL) traverse the membrane as a helical segment. Residues 198–459 (KLFPDMLPST…QNSKANSKGA (262 aa)) lie on the Mitochondrial matrix side of the membrane. The 221-residue stretch at 220–440 (KMMGAKLEIA…PAPQLNGTKI (221 aa)) folds into the Letm1 RBD domain. The interval 403–459 (LPPSIETPKTNLGIPSSPPPESKEDITDPAPQLNGTKILQAKSQETSQNSKANSKGA) is disordered. The segment covering 435-459 (LNGTKILQAKSQETSQNSKANSKGA) has biased composition (polar residues).

As to expression, testis and sperm.

The protein resides in the mitochondrion inner membrane. The polypeptide is LETM1 domain-containing protein LETM2, mitochondrial (Letm2) (Rattus norvegicus (Rat)).